The primary structure comprises 375 residues: MSCPVIELTQQLIRRPSLSPDDAGCQALMIERLRKIGFTIEHMDFGDTQNFWAWRGRGETLAFAGHTDVVPAGDVDRWINPPFEPTIRDGMLFGRGAADMKGSLAAMVVAAERFVAQHPHHRGRLAFLITSDEEASAKNGTVKVVEALMARNERLDYCLVGEPSSTEIVGDVVKNGRRGSLTCNLTIHGVQGHVAYPHLADNPVHRAAPFLNELVAIEWDRGNDFFPATSMQVANIQAGTGSNNVIPGELFVQFNFRFSTELTDEIIKERVHALLEKHQLRYTVDWWLSGQPFLTARGKLVDAVVNAIEHYNEIKPQLLTTGGTSDGRFIARMGAQVVELGPVNATIHKINECVNAADLQLLARMYQRIMEQLVA.

H66 lines the Zn(2+) pocket. D68 is an active-site residue. D99 serves as a coordination point for Zn(2+). The Proton acceptor role is filled by E133. Positions 134, 162, and 348 each coordinate Zn(2+).

It belongs to the peptidase M20A family. DapE subfamily. In terms of assembly, homodimer. Zn(2+) serves as cofactor. Co(2+) is required as a cofactor.

It catalyses the reaction N-succinyl-(2S,6S)-2,6-diaminopimelate + H2O = (2S,6S)-2,6-diaminopimelate + succinate. The protein operates within amino-acid biosynthesis; L-lysine biosynthesis via DAP pathway; LL-2,6-diaminopimelate from (S)-tetrahydrodipicolinate (succinylase route): step 3/3. In terms of biological role, catalyzes the hydrolysis of N-succinyl-L,L-diaminopimelic acid (SDAP), forming succinate and LL-2,6-diaminopimelate (DAP), an intermediate involved in the bacterial biosynthesis of lysine and meso-diaminopimelic acid, an essential component of bacterial cell walls. This chain is Succinyl-diaminopimelate desuccinylase, found in Salmonella choleraesuis (strain SC-B67).